The primary structure comprises 311 residues: Bifunctional protein FolD (311 aa).

174-176 (GKG) is an NADP(+) binding site.

It belongs to the tetrahydrofolate dehydrogenase/cyclohydrolase family. In terms of assembly, homodimer.

It carries out the reaction (6R)-5,10-methylene-5,6,7,8-tetrahydrofolate + NADP(+) = (6R)-5,10-methenyltetrahydrofolate + NADPH. The enzyme catalyses (6R)-5,10-methenyltetrahydrofolate + H2O = (6R)-10-formyltetrahydrofolate + H(+). Its pathway is one-carbon metabolism; tetrahydrofolate interconversion. Functionally, catalyzes the oxidation of 5,10-methylenetetrahydrofolate to 5,10-methenyltetrahydrofolate and then the hydrolysis of 5,10-methenyltetrahydrofolate to 10-formyltetrahydrofolate. This is Bifunctional protein FolD from Pyrobaculum neutrophilum (strain DSM 2338 / JCM 9278 / NBRC 100436 / V24Sta) (Thermoproteus neutrophilus).